Here is a 114-residue protein sequence, read N- to C-terminus: Beta-microseminoprotein (114 aa).

Positions 1–20 (MNVLLGGFVIFATFVTLCNA) are cleaved as a signal peptide. 5 cysteine pairs are disulfide-bonded: Cys22–Cys70, Cys38–Cys62, Cys57–Cys93, Cys60–Cys69, and Cys84–Cys107.

The protein belongs to the beta-microseminoprotein family. In terms of assembly, homodimer; Interacts with PI16.

The protein localises to the secreted. This is Beta-microseminoprotein (MSMB) from Macaca mulatta (Rhesus macaque).